Reading from the N-terminus, the 1863-residue chain is C-myc promoter-binding protein (1863 aa).

An MABP domain is found at 42–200 (KEPITDVSVI…AVYLCYKKSV (159 aa)). A uDENN domain is found at 192–364 (VYLCYKKSVA…KVPFPSPQRP (173 aa)). The 137-residue stretch at 385–521 (PLPLSGGKFS…PCKNLMNTLN (137 aa)) folds into the cDENN domain. Residues 523-641 (LHQQLAKLQQ…CSFVSDKDAS (119 aa)) enclose the dDENN domain. A Phosphoserine modification is found at S731. 2 PPR repeats span residues 772–808 (WFIC…MDPP) and 809–843 (DEVC…GIDP). The tract at residues 905–952 (DLGYNSLSKDEVRRGDTSTEDIQEEKDKKGSDCSSLSESESTKGSADC) is disordered. Basic and acidic residues predominate over residues 912-921 (SKDEVRRGDT). The Bipartite nuclear localization signal motif lies at 917-933 (RRGDTSTEDIQEEKDKK). Residues 936 to 949 (DCSSLSESESTKGS) show a composition bias toward low complexity. Residues S1015, S1035, S1099, S1151, and S1152 each carry the phosphoserine modification. A disordered region spans residues 1075-1111 (TRPNTLDIGKPPLRSKRDSLEKESSDDDTPFDGSNYL). Residues 1177-1202 (TEQQQKEEEEEDEDDSKSISTPSARR) are disordered. 3 positions are modified to phosphoserine: S1225, S1240, and S1251. 2 disordered regions span residues 1237–1306 (NKKS…SPSF) and 1348–1375 (SKDQ…TDED). Residues 1269–1279 (TKSEEKPRDRL) show a composition bias toward basic and acidic residues. A Phosphoserine modification is found at S1281. Composition is skewed to polar residues over residues 1297-1306 (DTLTHSSPSF) and 1348-1371 (SKDQ…STSL). Phosphoserine occurs at positions 1508, 1587, 1589, and 1591.

As to expression, expressed ubiquitously. Highest expression in bone marrow, medium in peripheral blood lymphocytes and lowest in spleen. In brain, breast, and prostate, higher expression was seen in normal cells than in tumor cells. Expression is regulated in a growth- and cell cycle-dependent manner.

It localises to the nucleus. Functionally, probable guanine nucleotide exchange factor (GEF) which may activate RAB10. Promotes the exchange of GDP to GTP, converting inactive GDP-bound Rab proteins into their active GTP-bound form. According to PubMed:8056341, it may bind to ISRE-like element (interferon-stimulated response element) of MYC P2 promoter. The sequence is that of C-myc promoter-binding protein (DENND4A) from Homo sapiens (Human).